The following is a 79-amino-acid chain: Putative membrane protein insertion efficiency factor (79 aa).

It belongs to the UPF0161 family.

It is found in the cell inner membrane. Could be involved in insertion of integral membrane proteins into the membrane. The chain is Putative membrane protein insertion efficiency factor from Prochlorococcus marinus (strain NATL1A).